Here is a 514-residue protein sequence, read N- to C-terminus: F-box-like/WD repeat-containing protein TBL1XR1 (514 aa).

Serine 2 carries the N-acetylserine modification. The LisH domain occupies 4–36; sequence SSDEVNFLVYRYLQESGFSHSAFTFGIESHISQ. The 46-residue stretch at 41-86 folds into the F-box-like domain; it reads GALVPPAALISIIQKGLQYVEAEVSINEDGTLFDGRPIESLSLIDA. N6-acetyllysine is present on lysine 102. Residues 114–139 form a disordered region; sequence AAAATNQQGSAKNGENTANGEENGAH. Over residues 124–135 the composition is skewed to low complexity; that stretch reads AKNGENTANGEE. WD repeat units follow at residues 167-206, 223-262, 264-303, 306-344, 347-386, 389-437, 440-479, and 481-513; these read GHESEVFICAWNPVSDLLASGSGDSTARIWNLSENSTSGP, PSNKDVTSLDWNSEGTLLATGSYDGFARIWTKDGNLASTL, QHKGPIFALKWNKKGNFILSAGVDKTTIIWDAHTGEAKQQ, FHSAPALDVDWQSNNTFASCSTDMCIHVCKLGQDRPIKT, GHTNEVNAIKWDPTGNLLASCSDDMTLKIWSMKQDNCVHD, AHNK…CIHT, KHQEPVYSVAFSPDGRYLASGSFDKCVHIWNTQTGALVHS, and RGTGGIFEVCWNAAGDKVGASASDGSVCVLDLR. Lysine 277 participates in a covalent cross-link: Glycyl lysine isopeptide (Lys-Gly) (interchain with G-Cter in SUMO2).

The protein belongs to the WD repeat EBI family. As to quaternary structure, component of the N-Cor repressor complex, at least composed of NCOR1, NCOR2, HDAC3, TBL1X, TBL1XR1, CORO2A and GPS2. Probable component of some E3 ubiquitin ligase complex. Interacts with histones H2B and H4. Interacts with MECP2; bridges interaction between MECP2 and NCOR1. Interacts with USP44.

The protein resides in the nucleus. F-box-like protein involved in the recruitment of the ubiquitin/19S proteasome complex to nuclear receptor-regulated transcription units. Plays an essential role in transcription activation mediated by nuclear receptors. Probably acts as integral component of the N-Cor corepressor complex that mediates the recruitment of the 19S proteasome complex, leading to the subsequent proteasomal degradation of N-Cor complex, thereby allowing cofactor exchange, and transcription activation. The polypeptide is F-box-like/WD repeat-containing protein TBL1XR1 (Tbl1xr1) (Mus musculus (Mouse)).